Consider the following 591-residue polypeptide: 2-succinyl-5-enolpyruvyl-6-hydroxy-3-cyclohexene-1-carboxylate synthase (591 aa).

It belongs to the TPP enzyme family. MenD subfamily. Homodimer. Mg(2+) is required as a cofactor. It depends on Mn(2+) as a cofactor. Requires thiamine diphosphate as cofactor.

The catalysed reaction is isochorismate + 2-oxoglutarate + H(+) = 5-enolpyruvoyl-6-hydroxy-2-succinyl-cyclohex-3-ene-1-carboxylate + CO2. It participates in quinol/quinone metabolism; 1,4-dihydroxy-2-naphthoate biosynthesis; 1,4-dihydroxy-2-naphthoate from chorismate: step 2/7. The protein operates within cofactor biosynthesis; phylloquinone biosynthesis. Functionally, catalyzes the thiamine diphosphate-dependent decarboxylation of 2-oxoglutarate and the subsequent addition of the resulting succinic semialdehyde-thiamine pyrophosphate anion to isochorismate to yield 2-succinyl-5-enolpyruvyl-6-hydroxy-3-cyclohexene-1-carboxylate (SEPHCHC). This Rippkaea orientalis (strain PCC 8801 / RF-1) (Cyanothece sp. (strain PCC 8801)) protein is 2-succinyl-5-enolpyruvyl-6-hydroxy-3-cyclohexene-1-carboxylate synthase.